The primary structure comprises 70 residues: MIVPWQQISPEALSNLIREFVLREGTDYGESEYSLEEKIAQVQQQLECGEAVVVFSELHETVDIQLKQKF.

The protein belongs to the UPF0270 family.

This is UPF0270 protein VV1_1320 from Vibrio vulnificus (strain CMCP6).